The chain runs to 473 residues: Photosystem II CP43 reaction center protein (473 aa).

Residues 1-14 constitute a propeptide that is removed on maturation; it reads MKTLYSLRRSYPVE. N-acetylthreonine is present on T15. The residue at position 15 (T15) is a Phosphothreonine. Transmembrane regions (helical) follow at residues 69 to 93, 134 to 155, 178 to 200, 255 to 275, and 291 to 312; these read LFEV…PHLA, LIGP…KDKN, KALY…RKIT, KPFA…LSYS, and WFNN…ASQA. E367 is a binding site for [CaMn4O5] cluster. A helical membrane pass occupies residues 447–471; sequence RARAAAAGFEKGIDRDTEPVLFMNP.

The protein belongs to the PsbB/PsbC family. PsbC subfamily. As to quaternary structure, PSII is composed of 1 copy each of membrane proteins PsbA, PsbB, PsbC, PsbD, PsbE, PsbF, PsbH, PsbI, PsbJ, PsbK, PsbL, PsbM, PsbT, PsbX, PsbY, PsbZ, Psb30/Ycf12, at least 3 peripheral proteins of the oxygen-evolving complex and a large number of cofactors. It forms dimeric complexes. The cofactor is Binds multiple chlorophylls and provides some of the ligands for the Ca-4Mn-5O cluster of the oxygen-evolving complex. It may also provide a ligand for a Cl- that is required for oxygen evolution. PSII binds additional chlorophylls, carotenoids and specific lipids..

Its subcellular location is the plastid. The protein resides in the chloroplast thylakoid membrane. In terms of biological role, one of the components of the core complex of photosystem II (PSII). It binds chlorophyll and helps catalyze the primary light-induced photochemical processes of PSII. PSII is a light-driven water:plastoquinone oxidoreductase, using light energy to abstract electrons from H(2)O, generating O(2) and a proton gradient subsequently used for ATP formation. This chain is Photosystem II CP43 reaction center protein, found in Zygnema circumcarinatum (Green alga).